Here is a 424-residue protein sequence, read N- to C-terminus: Probable serine/threonine-protein kinase PBL12 (424 aa).

Residues 88 to 368 (FSRSNMLGEG…CEVVKVLESI (281 aa)) enclose the Protein kinase domain. Residues 94-102 (LGEGGFGPV) and Lys-123 contribute to the ATP site. Asp-218 (proton acceptor) is an active-site residue.

The protein belongs to the protein kinase superfamily. Ser/Thr protein kinase family. Expressed specifically in roots.

Its subcellular location is the cell membrane. The catalysed reaction is L-seryl-[protein] + ATP = O-phospho-L-seryl-[protein] + ADP + H(+). It catalyses the reaction L-threonyl-[protein] + ATP = O-phospho-L-threonyl-[protein] + ADP + H(+). Its function is as follows. May play a role in the signal transduction pathway of osmotic stress. May be involved in plant defense signaling. The protein is Probable serine/threonine-protein kinase PBL12 of Arabidopsis thaliana (Mouse-ear cress).